We begin with the raw amino-acid sequence, 269 residues long: Surfeit locus protein 4 (269 aa).

5 helical membrane passes run 64–84 (LLAS…CVLV), 92–112 (YACF…SILW), 179–199 (FFSI…AIGF), 203–223 (LAAL…NAFW), and 239–259 (FFQT…GPGG). The Di-lysine motif motif lies at 266-269 (KKEW).

The protein belongs to the SURF4 family. Found in a complex composed at least of SURF4, TMED2 and TMED10. May interact with LMAN1. Interacts with ZFYVE27 and with KIF5A in a ZFYVE27-dependent manner. Interacts with STING1. Interacts with SAR1B. Interacts with TMEM41B.

It localises to the endoplasmic reticulum membrane. It is found in the endoplasmic reticulum-Golgi intermediate compartment membrane. The protein localises to the golgi apparatus membrane. Its function is as follows. Endoplasmic reticulum cargo receptor that mediates the export of lipoproteins by recruiting cargos into COPII vesicles to facilitate their secretion. Acts as a cargo receptor for lipoproteins bearing both APOB and APOA1, thereby regulating lipoprotein delivery and the maintenance of lipid homeostasis. Synergizes with the GTPase SAR1B to mediate transport of circulating lipoproteins. Promotes the secretion of PCSK9. Also mediates the efficient secretion of erythropoietin (EPO). May also play a role in the maintenance of the architecture of the endoplasmic reticulum-Golgi intermediate compartment and of the Golgi. The polypeptide is Surfeit locus protein 4 (Homo sapiens (Human)).